The following is a 170-amino-acid chain: Ureidoglycolate lyase (170 aa).

It belongs to the ureidoglycolate lyase family. Homodimer. Ni(2+) is required as a cofactor.

The catalysed reaction is (S)-ureidoglycolate = urea + glyoxylate. Its pathway is nitrogen metabolism; (S)-allantoin degradation. Its function is as follows. Catalyzes the catabolism of the allantoin degradation intermediate (S)-ureidoglycolate, generating urea and glyoxylate. Involved in the utilization of allantoin as nitrogen source. In Pseudomonas savastanoi pv. phaseolicola (strain 1448A / Race 6) (Pseudomonas syringae pv. phaseolicola (strain 1448A / Race 6)), this protein is Ureidoglycolate lyase.